The primary structure comprises 55 residues: Large ribosomal subunit protein bL33 (55 aa).

Belongs to the bacterial ribosomal protein bL33 family.

In Yersinia pestis (strain Pestoides F), this protein is Large ribosomal subunit protein bL33.